An 833-amino-acid chain; its full sequence is MTDNQEIKPKKLTLGNSKLSLNKSFDSLTGAQSFVNAKSKTLVEVRKSSIGSTTTISLNKERNNLDQTVIDANKEEFNRRLSILKKAAEQSKLNDPSQISTLSKLASINQSTNLKIETLETDKEVAQKRQNITENKVEVSAKIVQGDEDILSQIYKKKAETFVKSPLVGMRTRYSIESEKESDKTAESKVVVQKIKLEEPKKFKKVDLFNMLSDDESGSGRTRTRSLASIKRAREKEKRKLVLQAPEKVYREVTIPEVIGVGDLANAMSERVADVIKELMNLGILANASQVIDADTAELVATNLGHKVKRVQESDVENVLISDDKVEDLRTRAPVVTVMGHVDHGKTSLLDALKSTDIAAGEIGGITQHIGAYRVTLADGRAITFIDTPGHEAFSEMRSRGTKVTDIAIIVVAADDGIKTQTVEAINHAKVAGVPIIIAINKIDKPNIDIERVKNELYIHEIIGEEAGGDVMVIPISALKKINLDKLEEAILLIAEMQDLKASPFGSAAGVVIESKIEKGRGTLTTILVQRGTLKNGDIIIAGTSYGKVKKMTNDKGLEIAEATPSVPVEIQGLNEVPFAGVKFNVVQNEKQAKDIAEYRMRLAKEKKISIAPRSSLEDLFLKASGNSKIKELPLIIKGDVHGSVEAILGSLLKLPSDEIKLRILHSGVGPITESDISLAHASSAIIVGFNVRAGVNALTAAEKAKIDIRYYSIIYNLIDDVKAIMSGMLDPIVREQYIGSVEIRRVFNVTKVGKIAGSYVTKGIIKKGADVRLLRDNIVIHEGKLKTLKRFKDEVKEVREGYECGIAFENYEDIRENDVVEVFELIQEQRQL.

The 171-residue stretch at 331–501 (TRAPVVTVMG…LLIAEMQDLK (171 aa)) folds into the tr-type G domain. The segment at 340–347 (GHVDHGKT) is G1. 340–347 (GHVDHGKT) is a binding site for GTP. The segment at 365-369 (GITQH) is G2. Residues 387 to 390 (DTPG) form a G3 region. GTP contacts are provided by residues 387–391 (DTPGH) and 441–444 (NKID). The G4 stretch occupies residues 441 to 444 (NKID). A G5 region spans residues 477–479 (SAL).

The protein belongs to the TRAFAC class translation factor GTPase superfamily. Classic translation factor GTPase family. IF-2 subfamily.

It is found in the cytoplasm. One of the essential components for the initiation of protein synthesis. Protects formylmethionyl-tRNA from spontaneous hydrolysis and promotes its binding to the 30S ribosomal subunits. Also involved in the hydrolysis of GTP during the formation of the 70S ribosomal complex. In Rickettsia canadensis (strain McKiel), this protein is Translation initiation factor IF-2.